The following is a 389-amino-acid chain: Protein OSCP1 (389 aa).

In terms of tissue distribution, expressed predominantly in testis, also found in placenta and to a lesser extent in thymus and small intestine; abundantly expressed in tumor-derived cell lines. Ubiquitously expressed.

It is found in the basal cell membrane. In terms of biological role, may be involved in drug clearance in the placenta. This Homo sapiens (Human) protein is Protein OSCP1 (OSCP1).